The following is a 752-amino-acid chain: MAALEGPLLLPPSASLTTSPQTTCYQATWESQLEIFCCLATNSHLQAELTLEGLDKMMQPEPTFFACRAIRRLLLGERLHPFIHQEGTLLGKVGRRYSGEGLIIDGGGVFTRGQIDTDNYLPAVGSWELTDDCDKPCEFRELRSLYLPALLTCTICYKAMFRIVCRYLEFWEFEQCFHAFLAVLPHSLQPTIYQNYFALLESLKHLSFSIMPPASPDAQLHFLKFNISSFMATWGWHGELVSLRRAIAHNVERLPTVLKNLSKQSKHQDVKVNGRDLVGFQLALNQLVSRLHVKIQRKDPGPKPYRVVVSTPDCTYYLVYPGTPAIYRLVMCMAVADCIGHSCSGLHPCANFLGTHETPRLLAATLSRIRYAPKDRRAAMKGNLQACFQRYAATDARTLGSSTVSDMLEPTKHVSLENFKITIFNTNMVINTKISCHVPNTLQKTILNIPRLTNNFVIRKYSVKEPSFTISVFFSDNMCQGTAININISGDMLHFLFAMGTLKCFLPIRHIFPVSIANWNSTLDLHGLENQYMVRMGRKNVFWTTNFPSVVSSKDGLNVSWFKAATATISKVYGQPLVEQIRHELAPILTDQHARIDGNKNRIFSLLEHRNRSQIQTLHKRFLECLVECCSFLRLDVACIRRAAARGLFDFSKKIISHTKSKHECAVLGYKKCNLIPKIYARNKKTRLDELGRNANFISFVATTGHRFAALKPQIVRHAIRKLGLHWRHRTAASNEQTPPADPRVRCVRPLV.

This sequence belongs to the herpesviridae UL87 family. In terms of assembly, interacts with ORF34.

In terms of biological role, plays a role in the expression of late viral mRNAs together with ORF34. This chain is Protein ORF24 (ORF24), found in Homo sapiens (Human).